The following is a 668-amino-acid chain: Probable 6-phosphofructo-2-kinase PB17E12.14c (668 aa).

Residues 1 to 14 (MSNNNNKDDSELQS) show a composition bias toward basic and acidic residues. Disordered stretches follow at residues 1–105 (MSNN…GSRP) and 136–185 (HRVP…EATN). 3 stretches are compositionally biased toward polar residues: residues 46 to 56 (NDHSFTNTDSV), 65 to 86 (SPVS…QNSP), and 164 to 184 (SSMS…SEAT). 197–204 (GLPARGKS) provides a ligand contact to ATP. Active-site residues include Asp281 and Cys312. Arg346 is a beta-D-fructose 6-phosphate binding site. Residue Glu540 is part of the active site. Catalysis depends on His608, which acts as the Proton donor.

The enzyme catalyses beta-D-fructose 6-phosphate + ATP = beta-D-fructose 2,6-bisphosphate + ADP + H(+). Its function is as follows. Synthesis of fructose 2,6-bisphosphate. This is Probable 6-phosphofructo-2-kinase PB17E12.14c from Schizosaccharomyces pombe (strain 972 / ATCC 24843) (Fission yeast).